Consider the following 119-residue polypeptide: Ribonuclease P protein component (119 aa).

This sequence belongs to the RnpA family. In terms of assembly, consists of a catalytic RNA component (M1 or rnpB) and a protein subunit.

The catalysed reaction is Endonucleolytic cleavage of RNA, removing 5'-extranucleotides from tRNA precursor.. In terms of biological role, RNaseP catalyzes the removal of the 5'-leader sequence from pre-tRNA to produce the mature 5'-terminus. It can also cleave other RNA substrates such as 4.5S RNA. The protein component plays an auxiliary but essential role in vivo by binding to the 5'-leader sequence and broadening the substrate specificity of the ribozyme. The polypeptide is Ribonuclease P protein component (Streptococcus gordonii (strain Challis / ATCC 35105 / BCRC 15272 / CH1 / DL1 / V288)).